The primary structure comprises 822 residues: Cadherin-3 (822 aa).

An N-terminal signal peptide occupies residues 1 to 25 (MELLSGPHAFLLLLLQVCWLRSVVS). The propeptide occupies 26–99 (EPYRAGFIGE…PTRILRRRKR (74 aa)). 5 Cadherin domains span residues 100-207 (EWVM…KPKF), 208-320 (TQDT…APEF), 321-432 (EPQK…APVF), 433-538 (VPPS…DHGP), and 539-645 (IPEP…RPWK). Residues 100 to 647 (EWVMPPIFVP…NDCPRPWKGG (548 aa)) are Extracellular-facing. A glycan (N-linked (GlcNAc...) asparagine) is linked at Asn192. Asn558 is a glycosylation site (N-linked (GlcNAc...) asparagine). A helical membrane pass occupies residues 648–670 (FILPILGAVLALLTLLLALLLLV). Residues 671 to 822 (RKKRKVKEPL…ADMYGGGEDD (152 aa)) lie on the Cytoplasmic side of the membrane.

In terms of assembly, interacts with CDCP1 and CTNNB1.

It localises to the cell membrane. Functionally, cadherins are calcium-dependent cell adhesion proteins. They preferentially interact with themselves in a homophilic manner in connecting cells; cadherins may thus contribute to the sorting of heterogeneous cell types. This Mus musculus (Mouse) protein is Cadherin-3 (Cdh3).